The following is a 121-amino-acid chain: MARIAGVDIPREKRIVISLTYIYGIGKTKAQEILKAANVSEETRTRDLTEDELNRIREAIDGIKVEGDLRREVSLNIKRLIEIGAYRGIRHRRSLPVRGQNTKNNSRTRKGPRRTVANKKK.

Residues 94-121 are disordered; the sequence is SLPVRGQNTKNNSRTRKGPRRTVANKKK. The span at 106–121 shows a compositional bias: basic residues; sequence SRTRKGPRRTVANKKK.

Belongs to the universal ribosomal protein uS13 family. In terms of assembly, part of the 30S ribosomal subunit. Forms a loose heterodimer with protein S19. Forms two bridges to the 50S subunit in the 70S ribosome.

Its function is as follows. Located at the top of the head of the 30S subunit, it contacts several helices of the 16S rRNA. In the 70S ribosome it contacts the 23S rRNA (bridge B1a) and protein L5 of the 50S subunit (bridge B1b), connecting the 2 subunits; these bridges are implicated in subunit movement. Contacts the tRNAs in the A and P-sites. In Exiguobacterium sp. (strain ATCC BAA-1283 / AT1b), this protein is Small ribosomal subunit protein uS13.